Consider the following 329-residue polypeptide: Acetyl-coenzyme A carboxylase carboxyl transferase subunit alpha (329 aa).

The 255-residue stretch at 40-294 (QLESLASRRR…RAALERHLGE (255 aa)) folds into the CoA carboxyltransferase C-terminal domain.

The protein belongs to the AccA family. As to quaternary structure, acetyl-CoA carboxylase is a heterohexamer composed of biotin carboxyl carrier protein (AccB), biotin carboxylase (AccC) and two subunits each of ACCase subunit alpha (AccA) and ACCase subunit beta (AccD).

The protein localises to the cytoplasm. It carries out the reaction N(6)-carboxybiotinyl-L-lysyl-[protein] + acetyl-CoA = N(6)-biotinyl-L-lysyl-[protein] + malonyl-CoA. It participates in lipid metabolism; malonyl-CoA biosynthesis; malonyl-CoA from acetyl-CoA: step 1/1. Functionally, component of the acetyl coenzyme A carboxylase (ACC) complex. First, biotin carboxylase catalyzes the carboxylation of biotin on its carrier protein (BCCP) and then the CO(2) group is transferred by the carboxyltransferase to acetyl-CoA to form malonyl-CoA. The protein is Acetyl-coenzyme A carboxylase carboxyl transferase subunit alpha of Synechococcus sp. (strain CC9902).